We begin with the raw amino-acid sequence, 193 residues long: Leucyl/phenylalanyl-tRNA--protein transferase (193 aa).

It belongs to the L/F-transferase family.

It localises to the cytoplasm. The catalysed reaction is N-terminal L-lysyl-[protein] + L-leucyl-tRNA(Leu) = N-terminal L-leucyl-L-lysyl-[protein] + tRNA(Leu) + H(+). It catalyses the reaction N-terminal L-arginyl-[protein] + L-leucyl-tRNA(Leu) = N-terminal L-leucyl-L-arginyl-[protein] + tRNA(Leu) + H(+). It carries out the reaction L-phenylalanyl-tRNA(Phe) + an N-terminal L-alpha-aminoacyl-[protein] = an N-terminal L-phenylalanyl-L-alpha-aminoacyl-[protein] + tRNA(Phe). Functionally, functions in the N-end rule pathway of protein degradation where it conjugates Leu, Phe and, less efficiently, Met from aminoacyl-tRNAs to the N-termini of proteins containing an N-terminal arginine or lysine. In Gloeobacter violaceus (strain ATCC 29082 / PCC 7421), this protein is Leucyl/phenylalanyl-tRNA--protein transferase.